The following is a 269-amino-acid chain: Ribosomal RNA small subunit methyltransferase J (269 aa).

Residues 124 to 125 (ER) and Asp-188 contribute to the S-adenosyl-L-methionine site.

It belongs to the methyltransferase superfamily. RsmJ family.

Its subcellular location is the cytoplasm. It carries out the reaction guanosine(1516) in 16S rRNA + S-adenosyl-L-methionine = N(2)-methylguanosine(1516) in 16S rRNA + S-adenosyl-L-homocysteine + H(+). Functionally, specifically methylates the guanosine in position 1516 of 16S rRNA. The sequence is that of Ribosomal RNA small subunit methyltransferase J from Saccharophagus degradans (strain 2-40 / ATCC 43961 / DSM 17024).